The following is a 522-amino-acid chain: Protein nucleotidyltransferase YdiU (522 aa).

G109, G111, R112, K132, D144, G145, R195, and R202 together coordinate ATP. D271 (proton acceptor) is an active-site residue. Mg(2+) is bound by residues N272 and D281. D281 provides a ligand contact to ATP.

The protein belongs to the SELO family. Mg(2+) is required as a cofactor. Mn(2+) serves as cofactor.

The enzyme catalyses L-seryl-[protein] + ATP = 3-O-(5'-adenylyl)-L-seryl-[protein] + diphosphate. The catalysed reaction is L-threonyl-[protein] + ATP = 3-O-(5'-adenylyl)-L-threonyl-[protein] + diphosphate. It carries out the reaction L-tyrosyl-[protein] + ATP = O-(5'-adenylyl)-L-tyrosyl-[protein] + diphosphate. It catalyses the reaction L-histidyl-[protein] + UTP = N(tele)-(5'-uridylyl)-L-histidyl-[protein] + diphosphate. The enzyme catalyses L-seryl-[protein] + UTP = O-(5'-uridylyl)-L-seryl-[protein] + diphosphate. The catalysed reaction is L-tyrosyl-[protein] + UTP = O-(5'-uridylyl)-L-tyrosyl-[protein] + diphosphate. Its function is as follows. Nucleotidyltransferase involved in the post-translational modification of proteins. It can catalyze the addition of adenosine monophosphate (AMP) or uridine monophosphate (UMP) to a protein, resulting in modifications known as AMPylation and UMPylation. The chain is Protein nucleotidyltransferase YdiU from Burkholderia orbicola (strain MC0-3).